A 1396-amino-acid chain; its full sequence is Sterol 3-beta-glucosyltransferase (1396 aa).

The segment covering 1–16 (MRPLLDEAKRRVDRRL) has biased composition (basic and acidic residues). Disordered stretches follow at residues 1–59 (MRPL…TKEG), 82–193 (HARF…AAPV), and 206–233 (SKGSMNQSPRSPPAETQEEQSQEQTSAS). Over residues 18–28 (ASRQSLSTSRI) the composition is skewed to polar residues. Basic and acidic residues-rich tracts occupy residues 35-44 (ERLKDDHDAQ) and 82-108 (HARFDDSSDSERDTDRPPQKRTEKESQ). The span at 156–175 (GSSQRQGGAQTEPSTGNQMS) shows a compositional bias: polar residues. A GRAM 1 domain is found at 237-288 (LRLMEMFGFESPEKVLVEYACSLVQSMLLQGYMYVTEGHICFYAYLPRKSTV). The 99-residue stretch at 289-387 (AIKSGYLYKR…WVKSLQKVIF (99 aa)) folds into the PH domain. 2 stretches are compositionally biased toward polar residues: residues 459-479 (QAKNPSRESPQPGRTTPQSRA) and 487-497 (SLTSGLSQVLG). Disordered stretches follow at residues 459–531 (QAKN…RDLS) and 576–635 (FRRQ…VQQS). A compositionally biased stretch (basic and acidic residues) spans 585 to 595 (QFGRRHSDETA). A GRAM 2 domain is found at 719-785 (DRFRAHFALP…KDVENVEKEK (67 aa)). Positions 841-880 (EQDESEAAKAEHRMLQEARKDASGGLIPQTPSDESPEIHP) are disordered. Over residues 846–862 (EAAKAEHRMLQEARKDA) the composition is skewed to basic and acidic residues. 10 residues coordinate UDP-alpha-D-glucose: S907, R908, D910, A1210, H1212, H1225, G1229, T1230, D1249, and Q1250.

This sequence belongs to the glycosyltransferase 28 family.

It is found in the cytoplasm. The protein resides in the preautophagosomal structure membrane. It catalyses the reaction a sterol + UDP-alpha-D-glucose = a sterol 3-beta-D-glucoside + UDP + H(+). The catalysed reaction is ergosterol + UDP-alpha-D-glucose = ergosteryl 3-beta-D-glucoside + UDP + H(+). Sterol glycosyltransferase responsible for the glycosylation of ergosterol to form ergosterol-glucoside. The chain is Sterol 3-beta-glucosyltransferase from Aspergillus terreus (strain NIH 2624 / FGSC A1156).